A 509-amino-acid chain; its full sequence is MDAKLLLLPFPSPPATLHHHPPPPKSLFLGASLPLLHPPPPLRLLRPGAPRRLAVVAQAAVKRRKEIPFDNVIQRDKKLKLVLKLRNILVSNPDRVMSLRDLGRFRRDLGLTRKRRLIALLKRFPGVFEVVEEGVYSLRFRLTPAAERLYLDELHLKNESEGLAVTKLRKLLMMSQDKRILIEKIAHLKNDLGLPPEFRDTICLRYPQYFRVVQMDRGPGLELTHWDPELAVSAAEVAEEENRAREEQERNLIIDRPLKFNRVKLPQGLKLSRGEARRVAQFKEMPYISPYSDFSHLRSGSAEKEKHACGVVHEILSLTLEKRTLVDHLTHFREEFRFSQSLRGMLIRHPDMFYVSLKGDRDSVFLREAYKNSQLVEKSKLVLLKEKMRALVAVPRFPRRGVPATSEEADRTNGAAQMLSEGSDVEDDEDEGLSDMEDLISEISGGKSDTDYHWGDGWVGENDDSPPDFEDDDGSSLKEVKVTMKKTANSANGKAHVPVFPDGRPRERW.

The N-terminal 56 residues, 1 to 56 (MDAKLLLLPFPSPPATLHHHPPPPKSLFLGASLPLLHPPPPLRLLRPGAPRRLAVV), are a transit peptide targeting the chloroplast. In terms of domain architecture, PORR spans 65 to 393 (KEIPFDNVIQ…LKEKMRALVA (329 aa)). 2 disordered regions span residues 402 to 431 (VPAT…DEDE) and 444 to 509 (SGGK…RERW). Residues 461–474 (ENDDSPPDFEDDDG) are compositionally biased toward acidic residues.

It is found in the plastid. The protein resides in the chloroplast. RNA-binding protein involved in group II intron splicing. Binds specific group II introns and promotes their splicing. Functions in the context of a heterodimer with the ribonuclease III domain-containing protein RNC1. The chain is Protein WHAT'S THIS FACTOR 1 homolog, chloroplastic from Oryza sativa subsp. japonica (Rice).